The following is a 732-amino-acid chain: Eukaryotic translation initiation factor 3 subunit B (732 aa).

The sufficient for interaction with HCR1 and TIF32 stretch occupies residues 1–94; the sequence is MTTLESLKIE…LFIEMESVSA (94 aa). Residues 1-219 form a sufficient for interaction with PIC8 region; it reads MTTLESLKIE…GVTSWGGPNF (219 aa). The 84-residue stretch at 37-120 folds into the RRM domain; the sequence is NFLVVDGAPV…HRLLVNSLND (84 aa). WD repeat units follow at residues 185-224, 237-280, 439-481, and 507-554; these read ARKNWSNDVVKFSPKGTYLLSFHDQGVTSWGGPNFDRLKR, PTEK…LMKT, EMKD…KFFA, and VDQQ…KTLN.

It belongs to the eIF-3 subunit B family. In terms of assembly, component of the eukaryotic translation initiation factor 3 (eIF-3) complex.

It localises to the cytoplasm. Its function is as follows. RNA-binding component of the eukaryotic translation initiation factor 3 (eIF-3) complex, which is involved in protein synthesis of a specialized repertoire of mRNAs and, together with other initiation factors, stimulates binding of mRNA and methionyl-tRNAi to the 40S ribosome. The eIF-3 complex specifically targets and initiates translation of a subset of mRNAs involved in cell proliferation. The chain is Eukaryotic translation initiation factor 3 subunit B from Kluyveromyces lactis (strain ATCC 8585 / CBS 2359 / DSM 70799 / NBRC 1267 / NRRL Y-1140 / WM37) (Yeast).